Here is a 518-residue protein sequence, read N- to C-terminus: Serine--tRNA ligase, mitochondrial (518 aa).

The N-terminal 34 residues, methionine 1–phenylalanine 34, are a transit peptide targeting the mitochondrion. N6-acetyllysine is present on lysine 110. N6-succinyllysine is present on lysine 195. Threonine 299–glutamate 301 lines the L-serine pocket. ATP is bound at residue arginine 330 to glutamate 332. Lysine 337 carries the post-translational modification N6-succinyllysine. Valine 345 provides a ligand contact to ATP. An L-serine-binding site is contributed by glutamate 352. Glutamate 418 to serine 421 contacts ATP. Residue threonine 453 participates in L-serine binding. The interval proline 497–serine 518 is disordered.

Belongs to the class-II aminoacyl-tRNA synthetase family. Type-1 seryl-tRNA synthetase subfamily. In terms of assembly, homodimer. The tRNA molecule probably binds across the dimer. In terms of processing, two N-termini starting at positions 35 and 37 have been identified by direct sequencing.

Its subcellular location is the mitochondrion matrix. It carries out the reaction tRNA(Ser) + L-serine + ATP = L-seryl-tRNA(Ser) + AMP + diphosphate + H(+). The enzyme catalyses tRNA(Sec) + L-serine + ATP = L-seryl-tRNA(Sec) + AMP + diphosphate + H(+). Its pathway is aminoacyl-tRNA biosynthesis; selenocysteinyl-tRNA(Sec) biosynthesis; L-seryl-tRNA(Sec) from L-serine and tRNA(Sec): step 1/1. Functionally, catalyzes the attachment of serine to tRNA(Ser). Is also probably able to aminoacylate tRNA(Sec) with serine, to form the misacylated tRNA L-seryl-tRNA(Sec), which will be further converted into selenocysteinyl-tRNA(Sec). This Bos taurus (Bovine) protein is Serine--tRNA ligase, mitochondrial (SARS2).